Here is a 315-residue protein sequence, read N- to C-terminus: MPRIAYLGPQGTFTESALLQMISGAMVPGGDADDTAVTPVPTDSTPAGLEAVRSGAADYACVPIENSIEGSVLPTLDSLAVGAPLQIFAELTLAVSFSIVVRPDHDGDVATVAAFPVAAAQVRRWLAEHLPAAQLVPAHSNAAAAADVAGGRADAGISTALAAERYGLRSLAAGVVDEPNARTRFVLVGRPAPPPARTGADRTSVALRLPNTPGALVAAMTELSIRDIDLTRIESRPTRTELGTYVFFLDCVGHLEDDAVAEALKALHRRCEDVRYLGSWPTGTAAGAPPPSSDEATRWLTRLREGLPTPPEGGR.

The Prephenate dehydratase domain occupies 3-190; the sequence is RIAYLGPQGT…ARTRFVLVGR (188 aa). The region spanning 204–281 is the ACT domain; it reads SVALRLPNTP…EDVRYLGSWP (78 aa).

In terms of assembly, homodimer.

The catalysed reaction is prephenate + H(+) = 3-phenylpyruvate + CO2 + H2O. It participates in amino-acid biosynthesis; L-phenylalanine biosynthesis; phenylpyruvate from prephenate: step 1/1. The polypeptide is Prephenate dehydratase (pheA) (Mycobacterium sp. (strain JLS)).